The sequence spans 842 residues: TATA box-binding protein-associated factor, RNA polymerase I, subunit C (842 aa).

Disordered regions lie at residues 574–605 (SSLREPDHPAPERPASRAAAPPVDQGSTPSWT), 667–690 (RPGDLGTLPKAEPPPAPQCSQQDE), and 702–842 (QAAA…RMGF). Positions 577–588 (REPDHPAPERPA) are enriched in basic and acidic residues. Polar residues predominate over residues 745 to 760 (DASSAPHSQDLSNSEA). Residues 783–794 (QHERRQTLRDYM) are compositionally biased toward basic and acidic residues. Threonine 808 carries the post-translational modification Phosphothreonine. Residues 809–826 (PPSQTSSRQTRSFRQQTP) show a composition bias toward low complexity. Residues 833–842 (PPRKKPRMGF) show a composition bias toward basic residues.

Component of the transcription factor SL1/TIF-IB complex, composed of TBP and at least TAF1A, TAF1B, TAF1C and TAF1D. In the complex interacts directly with TBP, TAF1A and TAF1B. Interaction of the SL1/TIF-IB subunits with TBP excludes interaction of TBP with the transcription factor IID (TFIID) subunits. Interacts with MYC and RRN3. Interacts with p53/TP53; the interaction prevents the association of SL1/TIF-IB with UBTF and represses RNA polymerase I transcription. Part of Pol I pre-initiation complex (PIC), in which Pol I core assembles with RRN3 and promoter-bound UTBF and SL1/TIF-IB complex.

The protein localises to the nucleus. It is found in the nucleolus. Component of the transcription factor SL1/TIF-IB complex, which is involved in the assembly of the PIC (pre-initiation complex) during RNA polymerase I-dependent transcription. The rate of PIC formation probably is primarily dependent on the rate of association of SL1/TIF-IB with the rDNA promoter. SL1/TIF-IB is involved in stabilization of nucleolar transcription factor 1/UBTF on rDNA. Formation of SL1/TIF-IB excludes the association of TBP with TFIID subunits. Recruits RNA polymerase I to the rRNA gene promoter via interaction with RRN3. This Rattus norvegicus (Rat) protein is TATA box-binding protein-associated factor, RNA polymerase I, subunit C (Taf1c).